A 525-amino-acid chain; its full sequence is MMDDKHGRYGACDRCRGQKLRCVGAGKPIPNSSSRLLRNEIPCDRCRRAKVECYSVRPAPRRAASNVKEQMIATQAASERSSSLAYHTSGPVVSPPNSLVTAASKPHPNSLSFNHPRSDAVAAPGGLQTRRQSRDTDSLGDMPSMPHEWMAYLHDHKMDDRQGLGMETPPLIESDLNLSRDPAMDSMHEHNMMMELIHQDHQEEWNSGPPELEAYPDPIVPPNPAPLKARKLTSPDCDDYPYGHTRRSSHTPTQPPEPAGRSCIQELAQFNEMLLRDKCSLEDTSARRGYKDSWLSIGRTLHHCQQFFSILKRIKYSRPDSQLSADRARSQWSSLPEGTSLADGAPTDSPQARRSLARGATPCSSSLARSSSTSSAASTSYLGLSTLLSILFCYTYILQAYEDILTSILHAVTRPTPTIPPTLSGLRIDGFQLDGHHTLQLECLLHVSYNLLEKIENILFGSAGPEELSNPVKYGILGDKLSAGLIDALFEHNETNGLLHCQGKREVAAKRLIREIQAALKQLDL.

The zn(2)-C6 fungal-type DNA-binding region spans 12–53 (CDRCRGQKLRCVGAGKPIPNSSSRLLRNEIPCDRCRRAKVEC). Disordered regions lie at residues 80-142 (RSSS…LGDM), 204-260 (EWNS…EPAG), and 327-371 (RARS…ARSS). The segment covering 95–115 (PPNSLVTAASKPHPNSLSFNH) has biased composition (polar residues). Residues 327–337 (RARSQWSSLPE) are compositionally biased toward polar residues.

The protein localises to the nucleus. Transcription factor that regulates the expression of the gene cluster that mediates the biosynthesis of the isoquinoline alkaloids fumisoquin A, fumisoquin B and fumisoquin C; as well as small amounts of fumipyrrole as a shunt metabolite. The products of the cluster lead to a brown coloration and are important for growth and conidiation. This chain is C6 finger transcription factor fsqA, found in Aspergillus fumigatus (strain ATCC MYA-4609 / CBS 101355 / FGSC A1100 / Af293) (Neosartorya fumigata).